Consider the following 313-residue polypeptide: Carbamate kinase 2 (313 aa).

This sequence belongs to the carbamate kinase family.

The protein resides in the cytoplasm. The catalysed reaction is hydrogencarbonate + NH4(+) + ATP = carbamoyl phosphate + ADP + H2O + H(+). It participates in metabolic intermediate metabolism; carbamoyl phosphate degradation; CO(2) and NH(3) from carbamoyl phosphate: step 1/1. This chain is Carbamate kinase 2 (arcC2), found in Staphylococcus aureus (strain MRSA252).